Consider the following 132-residue polypeptide: Phosphoribosyl-AMP cyclohydrolase (132 aa).

Residue Asp85 coordinates Mg(2+). Cys86 is a Zn(2+) binding site. Positions 87 and 89 each coordinate Mg(2+). Zn(2+)-binding residues include Cys102 and Cys109.

It belongs to the PRA-CH family. As to quaternary structure, homodimer. It depends on Mg(2+) as a cofactor. Requires Zn(2+) as cofactor.

The protein resides in the cytoplasm. It catalyses the reaction 1-(5-phospho-beta-D-ribosyl)-5'-AMP + H2O = 1-(5-phospho-beta-D-ribosyl)-5-[(5-phospho-beta-D-ribosylamino)methylideneamino]imidazole-4-carboxamide. Its pathway is amino-acid biosynthesis; L-histidine biosynthesis; L-histidine from 5-phospho-alpha-D-ribose 1-diphosphate: step 3/9. Catalyzes the hydrolysis of the adenine ring of phosphoribosyl-AMP. The chain is Phosphoribosyl-AMP cyclohydrolase from Frankia alni (strain DSM 45986 / CECT 9034 / ACN14a).